The primary structure comprises 298 residues: MGLCKCPKRLVTNQFCFEHRVNVCEHCMVQSHPKCIVQSYLQWLRDSDYISNCTLCGTTLEQGDCVRLVCYHVFHWDCLNARQAALPANTAPRGHQCPACTVEIFPNANLVSPVADALKSFLSQVNWGRNGLGLALLSEEQNSLKAIKPKVASQSAVSNMTKVHHIHSGGERERTKPNGHDAVSPHSVLLMDAFNPPSAGDYASSRRPLLPRQSPIGGTDRDDNKYQRRTPAELFSRWTRRFYAPSSRPPWRRTWFLVTAGILAFVLFVYLMAWLGRGGSDAVDEGWNNPNPQPNHYE.

The segment at 1–43 (MGLCKCPKRLVTNQFCFEHRVNVCEHCMVQSHPKCIVQSYLQW) adopts a B box-type; degenerate zinc-finger fold. The segment at 53-101 (CTLCGTTLEQGDCVRLVCYHVFHWDCLNARQAALPANTAPRGHQCPACT) adopts an RING-type; atypical zinc-finger fold. The disordered stretch occupies residues 199-230 (AGDYASSRRPLLPRQSPIGGTDRDDNKYQRRT). Phosphoserine is present on Ser-214. A helical membrane pass occupies residues 255-275 (WFLVTAGILAFVLFVYLMAWL).

The protein belongs to the ZFPL1 family.

Its subcellular location is the membrane. The protein is Zinc finger protein-like 1 homolog of Drosophila erecta (Fruit fly).